The primary structure comprises 186 residues: ATP synthase subunit delta (186 aa).

This sequence belongs to the ATPase delta chain family. As to quaternary structure, F-type ATPases have 2 components, F(1) - the catalytic core - and F(0) - the membrane proton channel. F(1) has five subunits: alpha(3), beta(3), gamma(1), delta(1), epsilon(1). F(0) has three main subunits: a(1), b(2) and c(10-14). The alpha and beta chains form an alternating ring which encloses part of the gamma chain. F(1) is attached to F(0) by a central stalk formed by the gamma and epsilon chains, while a peripheral stalk is formed by the delta and b chains.

Its subcellular location is the cell membrane. Functionally, f(1)F(0) ATP synthase produces ATP from ADP in the presence of a proton or sodium gradient. F-type ATPases consist of two structural domains, F(1) containing the extramembraneous catalytic core and F(0) containing the membrane proton channel, linked together by a central stalk and a peripheral stalk. During catalysis, ATP synthesis in the catalytic domain of F(1) is coupled via a rotary mechanism of the central stalk subunits to proton translocation. This protein is part of the stalk that links CF(0) to CF(1). It either transmits conformational changes from CF(0) to CF(1) or is implicated in proton conduction. The protein is ATP synthase subunit delta of Mycoplasmopsis agalactiae (strain NCTC 10123 / CIP 59.7 / PG2) (Mycoplasma agalactiae).